Here is a 105-residue protein sequence, read N- to C-terminus: Large ribosomal subunit protein bL21 (105 aa).

It belongs to the bacterial ribosomal protein bL21 family. As to quaternary structure, part of the 50S ribosomal subunit. Contacts protein L20.

Its function is as follows. This protein binds to 23S rRNA in the presence of protein L20. In Rickettsia prowazekii (strain Madrid E), this protein is Large ribosomal subunit protein bL21.